We begin with the raw amino-acid sequence, 121 residues long: Basic phospholipase A2 CoaTx-II (121 aa).

7 disulfides stabilise this stretch: Cys26-Cys115, Cys28-Cys44, Cys43-Cys95, Cys49-Cys121, Cys50-Cys88, Cys57-Cys81, and Cys75-Cys86. Residues 105–117 (KKYRIYPKFLCKK) form an important for membrane-damaging activities in eukaryotes and bacteria; heparin-binding region.

It belongs to the phospholipase A2 family. Group II subfamily. K49 sub-subfamily. As to quaternary structure, homodimer; non-covalently-linked. In terms of tissue distribution, expressed by the venom gland.

The protein localises to the secreted. Its function is as follows. Snake venom phospholipase A2 (PLA2) that lacks enzymatic inactivity. It shows antibacterial activity against both Gram-negative and Gram-positive bacteria, including methicillin-resistant strains. In vivo, it causes local muscular damage, but no systemic damage (intravenous administration does not elevate plasma creatine kinase). Also causes an inflammatory activity that is demonstrated by mice paw edema induction and pro-inflammatory cytokine IL-6 elevation. A model of myotoxic mechanism has been proposed: an apo Lys49-PLA2 is activated by the entrance of a hydrophobic molecule (e.g. fatty acid) at the hydrophobic channel of the protein leading to a reorientation of a monomer. This reorientation causes a transition between 'inactive' to 'active' states, causing alignment of C-terminal and membrane-docking sites (MDoS) side-by-side and putting the membrane-disruption sites (MDiS) in the same plane, exposed to solvent and in a symmetric position for both monomers. The MDoS region stabilizes the toxin on membrane by the interaction of charged residues with phospholipid head groups. Subsequently, the MDiS region destabilizes the membrane with penetration of hydrophobic residues. This insertion causes a disorganization of the membrane, allowing an uncontrolled influx of ions (i.e. calcium and sodium), and eventually triggering irreversible intracellular alterations and cell death. This Crotalus lutosus abyssus (Grand Canyon rattlesnake) protein is Basic phospholipase A2 CoaTx-II.